Reading from the N-terminus, the 281-residue chain is MEMO1 family protein PAE0818 (281 aa).

It belongs to the MEMO1 family.

This Pyrobaculum aerophilum (strain ATCC 51768 / DSM 7523 / JCM 9630 / CIP 104966 / NBRC 100827 / IM2) protein is MEMO1 family protein PAE0818.